Here is a 441-residue protein sequence, read N- to C-terminus: Histone-lysine N-methyltransferase set9 (441 aa).

An SET domain is found at 108–221; it reads CKFEICSTNQ…PGEEITTFYS (114 aa).

The protein belongs to the class V-like SAM-binding methyltransferase superfamily. Histone-lysine methyltransferase family. Suvar4-20 subfamily.

It localises to the nucleus. It is found in the chromosome. It catalyses the reaction L-lysyl(20)-[histone H4] + 3 S-adenosyl-L-methionine = N(6),N(6),N(6)-trimethyl-L-lysyl(20)-[histone H4] + 3 S-adenosyl-L-homocysteine + 3 H(+). Functionally, histone methyltransferase that specifically trimethylates 'Lys-20' of histone H4 to form H4K20me3. H4 'Lys-20' methylation is apparently not involved in the regulation of gene expression or heterochromatin function but participates in DNA damage response by giving a 'histone mark' required for the recruitment of the checkpoint protein Crb2 to sites of DNA damage. This Schizosaccharomyces pombe (strain 972 / ATCC 24843) (Fission yeast) protein is Histone-lysine N-methyltransferase set9 (set9).